A 100-amino-acid chain; its full sequence is Large ribosomal subunit protein uL23 (100 aa).

Belongs to the universal ribosomal protein uL23 family. As to quaternary structure, part of the 50S ribosomal subunit. Contacts protein L29, and trigger factor when it is bound to the ribosome.

In terms of biological role, one of the early assembly proteins it binds 23S rRNA. One of the proteins that surrounds the polypeptide exit tunnel on the outside of the ribosome. Forms the main docking site for trigger factor binding to the ribosome. This is Large ribosomal subunit protein uL23 from Shewanella oneidensis (strain ATCC 700550 / JCM 31522 / CIP 106686 / LMG 19005 / NCIMB 14063 / MR-1).